The chain runs to 513 residues: Gluconokinase (513 aa).

Residues Lys16, Thr261, Gly300, and 412 to 416 each bind ATP; that span reads GFARS.

Belongs to the FGGY kinase family.

The catalysed reaction is D-gluconate + ATP = 6-phospho-D-gluconate + ADP + H(+). The protein operates within carbohydrate acid metabolism; D-gluconate degradation. Its activity is regulated as follows. Catabolite repression by gluconate. The sequence is that of Gluconokinase (gntK) from Bacillus subtilis (strain 168).